The following is a 144-amino-acid chain: uncharacterized protein (144 aa).

This is an uncharacterized protein from Archaeoglobus fulgidus (strain ATCC 49558 / DSM 4304 / JCM 9628 / NBRC 100126 / VC-16).